The primary structure comprises 339 residues: DNA-directed RNA polymerase subunit alpha (339 aa).

Residues 1–233 (MVREEVAGST…DLFLPFLHAE (233 aa)) are alpha N-terminal domain (alpha-NTD). The interval 266–339 (GIPLNCIFID…MDLLKNKLSF (74 aa)) is alpha C-terminal domain (alpha-CTD).

It belongs to the RNA polymerase alpha chain family. In plastids the minimal PEP RNA polymerase catalytic core is composed of four subunits: alpha, beta, beta', and beta''. When a (nuclear-encoded) sigma factor is associated with the core the holoenzyme is formed, which can initiate transcription.

It is found in the plastid. It localises to the chloroplast. It catalyses the reaction RNA(n) + a ribonucleoside 5'-triphosphate = RNA(n+1) + diphosphate. Its function is as follows. DNA-dependent RNA polymerase catalyzes the transcription of DNA into RNA using the four ribonucleoside triphosphates as substrates. The protein is DNA-directed RNA polymerase subunit alpha of Agrostis stolonifera (Creeping bentgrass).